A 56-amino-acid polypeptide reads, in one-letter code: Bacteriocin sublancin-168 (56 aa).

A propeptide spanning residues 1 to 19 (MEKLFKEVKLEELENQKGS) is cleaved from the precursor. Intrachain disulfides connect C26–C55 and C33–C48. C41 is a glycosylation site (S-linked (Glc) cysteine; by host).

In terms of assembly, monomer. Post-translationally, production of active sublancin-168 requires at least one thiol-disulfide oxidoreductase (BdbB or, in its absence, BdbC). Membrane translocation and cleavage of the precursor are probably performed by SunT.

The protein resides in the secreted. Functionally, bacteriocin active against Gram-positive bacteria. Inhibits B.cereus spore outgrowth, after the germination stage, approximately 1000-fold better than it inhibits exponential growth of the same cells. Inhibits B.subtilis strain ATCC 6633. This Bacillus pumilus (Bacillus mesentericus) protein is Bacteriocin sublancin-168 (sunA).